The chain runs to 203 residues: Superoxide dismutase [Mn] (203 aa).

Positions 27, 81, 167, and 171 each coordinate Mn(2+).

This sequence belongs to the iron/manganese superoxide dismutase family. In terms of assembly, homodimer. It depends on Mn(2+) as a cofactor.

It catalyses the reaction 2 superoxide + 2 H(+) = H2O2 + O2. Its function is as follows. Destroys superoxide anion radicals which are normally produced within the cells and which are toxic to biological systems. This Buchnera aphidicola subsp. Acyrthosiphon pisum (strain APS) (Acyrthosiphon pisum symbiotic bacterium) protein is Superoxide dismutase [Mn] (sodA).